We begin with the raw amino-acid sequence, 640 residues long: Endoglucanase 1 (640 aa).

Positions 1 to 24 are cleaved as a signal peptide; that stretch reads MARRGGAAASSSMANLLGVALVLA. Residue aspartate 94 is the Nucleophile of the active site. Catalysis depends on residues histidine 433, aspartate 485, and glutamate 494. Asparagine 528 and asparagine 548 each carry an N-linked (GlcNAc...) asparagine glycan.

Belongs to the glycosyl hydrolase 9 (cellulase E) family. Expressed in roots, leaf sheaths and flowers.

Its subcellular location is the secreted. It carries out the reaction Endohydrolysis of (1-&gt;4)-beta-D-glucosidic linkages in cellulose, lichenin and cereal beta-D-glucans.. The protein is Endoglucanase 1 (GLU7) of Oryza sativa subsp. japonica (Rice).